The following is a 1135-amino-acid chain: Retinoblastoma-like protein 2 (1135 aa).

The tract at residues 1 to 43 (MASGGNQSSPPPPAAAASSEEEEEDGDTADRAQPAGSPSHQIQ) is disordered. Position 410 is a phosphoserine (Ser-410). Thr-414 is subject to Phosphothreonine. The tract at residues 414 to 613 (TPVSTATHSL…DRIRDNENRV (200 aa)) is domain A. Residues 414–1021 (TPVSTATHSL…QTFAMKYSQA (608 aa)) form a pocket; binds E1A region. Residue Ser-417 is glycosylated (O-linked (GlcNAc) serine). Residues 614 to 824 (PTCEEVTPPH…QGQPLTSSSI (211 aa)) form a spacer region. A Phosphoserine modification is found at Ser-636. At Thr-639 the chain carries Phosphothreonine. Disordered stretches follow at residues 649-698 (DAGG…PPQP), 806-825 (ISPG…SSIR), and 932-995 (RRNS…EEEE). The segment covering 656 to 674 (SVTSPTTLYDRYSSPTVST) has biased composition (polar residues). Phosphoserine occurs at positions 659, 669, and 684. Residues 806–818 (ISPGGQQQNQGQP) are compositionally biased toward low complexity. Positions 825-1021 (RPRKTSSLSL…QTFAMKYSQA (197 aa)) are domain B. 2 stretches are compositionally biased toward polar residues: residues 935 to 950 (SGSC…PTEL) and 958 to 969 (DSSPVMRSNSTL). A phosphoserine mark is found at Ser-942, Ser-946, Ser-960, Ser-965, and Ser-967. Thr-968 is modified (phosphothreonine). Residues 971–981 (VPQPSSAPPTP) show a composition bias toward pro residues. Phosphoserine is present on residues Ser-975 and Ser-976. Thr-980 is modified (phosphothreonine). Phosphoserine is present on residues Ser-1031, Ser-1064, Ser-1076, and Ser-1108.

Belongs to the retinoblastoma protein (RB) family. In terms of assembly, interacts with AATF, KMT5B and KMT5C. Component of the DREAM complex (also named LINC complex) at least composed of E2F4, E2F5, LIN9, LIN37, LIN52, LIN54, MYBL1, MYBL2, RBL1, RBL2, RBBP4, TFDP1 and TFDP2. The complex exists in quiescent cells where it represses cell cycle-dependent genes. It dissociates in S phase when LIN9, LIN37, LIN52 and LIN54 form a subcomplex that binds to MYBL2. Interacts with USP4. Part of the peroxisome proliferator activated receptor alpha (PPAR-alpha) interacting complex (PRIC). Interacts with RINT1. Interacts with PML. Interacts with RBBP9. Interacts with CD53. During G0 and early G1 phase of the cell cycle, phosphorylated on Ser-636 and on 5 sites within the domain B. Phosphorylation on Ser-669 in G1 leads to its ubiquitin-dependent proteolysis.

Its subcellular location is the nucleus. Its function is as follows. Key regulator of entry into cell division. Directly involved in heterochromatin formation by maintaining overall chromatin structure and, in particular, that of constitutive heterochromatin by stabilizing histone methylation. Recruits and targets histone methyltransferases KMT5B and KMT5C, leading to epigenetic transcriptional repression. Controls histone H4 'Lys-20' trimethylation. Probably acts as a transcription repressor by recruiting chromatin-modifying enzymes to promoters. Potent inhibitor of E2F-mediated trans-activation, associates preferentially with E2F5. Binds to cyclins A and E. Binds to and may be involved in the transforming capacity of the adenovirus E1A protein. May act as a tumor suppressor. The sequence is that of Retinoblastoma-like protein 2 (Rbl2) from Rattus norvegicus (Rat).